The sequence spans 196 residues: Large ribosomal subunit protein eL15 (196 aa).

The segment at 156 to 196 is disordered; the sequence is HRGRAERGKTSAGRKGRGMRTRGRGTEKTRPSIRSHANQGK. Positions 167–178 are enriched in basic residues; the sequence is AGRKGRGMRTRG.

This sequence belongs to the eukaryotic ribosomal protein eL15 family.

The protein is Large ribosomal subunit protein eL15 of Methanoregula boonei (strain DSM 21154 / JCM 14090 / 6A8).